Here is a 331-residue protein sequence, read N- to C-terminus: Phosphoenolpyruvate transferase (331 aa).

Asp63 contacts 7,8-didemethyl-8-hydroxy-5-deazariboflavin.

It belongs to the CofD family. As to quaternary structure, homodimer. It depends on Mg(2+) as a cofactor.

It carries out the reaction enolpyruvoyl-2-diphospho-5'-guanosine + 7,8-didemethyl-8-hydroxy-5-deazariboflavin = dehydro coenzyme F420-0 + GMP + H(+). Its pathway is cofactor biosynthesis; coenzyme F420 biosynthesis. Catalyzes the transfer of the phosphoenolpyruvate moiety from enoylpyruvoyl-2-diphospho-5'-guanosine (EPPG) to 7,8-didemethyl-8-hydroxy-5-deazariboflavin (FO) with the formation of dehydro coenzyme F420-0 and GMP. This is Phosphoenolpyruvate transferase from Mycobacterium bovis (strain ATCC BAA-935 / AF2122/97).